The chain runs to 412 residues: Subtilisin-like protease 6 (412 aa).

The first 20 residues, 1–20 (MGFITKAIPIVLAALSTVNG), serve as a signal peptide directing secretion. Positions 21–127 (ARILEAGPHA…VRATTNGTNL (107 aa)) are excised as a propeptide. The region spanning 36 to 120 (KYIVVMKKDV…FIEPDFVVRA (85 aa)) is the Inhibitor I9 domain. N-linked (GlcNAc...) asparagine glycans are attached at residues asparagine 123 and asparagine 126. A Peptidase S8 domain is found at 135–412 (SWGLARVSTR…SKLIYNGSGK (278 aa)). Active-site charge relay system residues include aspartate 167 and histidine 198. 3 N-linked (GlcNAc...) asparagine glycosylation sites follow: asparagine 252, asparagine 264, and asparagine 325. The active-site Charge relay system is the serine 358. Residue asparagine 408 is glycosylated (N-linked (GlcNAc...) asparagine).

The protein belongs to the peptidase S8 family.

The protein resides in the secreted. Functionally, secreted subtilisin-like serine protease with keratinolytic activity that contributes to pathogenicity. This Trichophyton verrucosum (Cattle ringworm fungus) protein is Subtilisin-like protease 6 (SUB6).